The primary structure comprises 123 residues: Large ribosomal subunit protein uL29y (123 aa).

Belongs to the universal ribosomal protein uL29 family.

The protein is Large ribosomal subunit protein uL29y (RPL35B) of Arabidopsis thaliana (Mouse-ear cress).